Consider the following 92-residue polypeptide: Acylphosphatase (92 aa).

One can recognise an Acylphosphatase-like domain in the interval 5 to 92; sequence RWHLLVSGKV…QEFTDFRTTH (88 aa). Residues R20 and N38 contribute to the active site.

Belongs to the acylphosphatase family.

The catalysed reaction is an acyl phosphate + H2O = a carboxylate + phosphate + H(+). The sequence is that of Acylphosphatase (acyP) from Marinobacter nauticus (strain ATCC 700491 / DSM 11845 / VT8) (Marinobacter aquaeolei).